A 93-amino-acid chain; its full sequence is Molybdopterin synthase sulfur carrier subunit (93 aa).

The residue at position 93 (Gly-93) is a 1-thioglycine; alternate. Residue Gly-93 is modified to Glycyl adenylate; alternate.

This sequence belongs to the MoaD family. MOCS2A subfamily. As to quaternary structure, heterotetramer; composed of 2 small (MOCS2A) and 2 large (MOCS2B) subunits. C-terminal thiocarboxylation occurs in 2 steps, it is first acyl-adenylated (-COAMP) via the hesA/moeB/thiF part of uba4, then thiocarboxylated (-COSH) via the rhodanese domain of uba4.

The protein localises to the cytoplasm. The protein operates within cofactor biosynthesis; molybdopterin biosynthesis. Its function is as follows. Acts as a sulfur carrier required for molybdopterin biosynthesis. Component of the molybdopterin synthase complex that catalyzes the conversion of precursor Z into molybdopterin by mediating the incorporation of 2 sulfur atoms into precursor Z to generate a dithiolene group. In the complex, serves as sulfur donor by being thiocarboxylated (-COSH) at its C-terminus by uba4. After interaction with MOCS2B, the sulfur is then transferred to precursor Z to form molybdopterin. This chain is Molybdopterin synthase sulfur carrier subunit, found in Pyrenophora tritici-repentis (strain Pt-1C-BFP) (Wheat tan spot fungus).